We begin with the raw amino-acid sequence, 99 residues long: NADH-quinone oxidoreductase subunit K (99 aa).

Transmembrane regions (helical) follow at residues proline 3–leucine 23, isoleucine 28–phenylalanine 48, and phenylalanine 62–isoleucine 82.

This sequence belongs to the complex I subunit 4L family. NDH-1 is composed of 14 different subunits. Subunits NuoA, H, J, K, L, M, N constitute the membrane sector of the complex.

Its subcellular location is the cell membrane. It catalyses the reaction a quinone + NADH + 5 H(+)(in) = a quinol + NAD(+) + 4 H(+)(out). Functionally, NDH-1 shuttles electrons from NADH, via FMN and iron-sulfur (Fe-S) centers, to quinones in the respiratory chain. The immediate electron acceptor for the enzyme in this species is believed to be a menaquinone. Couples the redox reaction to proton translocation (for every two electrons transferred, four hydrogen ions are translocated across the cytoplasmic membrane), and thus conserves the redox energy in a proton gradient. This chain is NADH-quinone oxidoreductase subunit K, found in Acidothermus cellulolyticus (strain ATCC 43068 / DSM 8971 / 11B).